The chain runs to 252 residues: Chitooligosaccharide deacetylase (252 aa).

Residues histidine 61 and histidine 125 each contribute to the Mg(2+) site.

Belongs to the YdjC deacetylase family. ChbG subfamily. As to quaternary structure, homodimer. It depends on Mg(2+) as a cofactor.

It is found in the cytoplasm. The enzyme catalyses N,N'-diacetylchitobiose + H2O = N-acetyl-beta-D-glucosaminyl-(1-&gt;4)-D-glucosamine + acetate. It catalyses the reaction diacetylchitobiose-6'-phosphate + H2O = N'-monoacetylchitobiose-6'-phosphate + acetate. It participates in glycan degradation; chitin degradation. Involved in the degradation of chitin. ChbG is essential for growth on the acetylated chitooligosaccharides chitobiose and chitotriose but is dispensable for growth on cellobiose and chitosan dimer, the deacetylated form of chitobiose. Deacetylation of chitobiose-6-P and chitotriose-6-P is necessary for both the activation of the chb promoter by the regulatory protein ChbR and the hydrolysis of phosphorylated beta-glucosides by the phospho-beta-glucosidase ChbF. Catalyzes the removal of only one acetyl group from chitobiose-6-P to yield monoacetylchitobiose-6-P, the inducer of ChbR and the substrate of ChbF. In Enterobacter sp. (strain 638), this protein is Chitooligosaccharide deacetylase.